The sequence spans 284 residues: Pantothenate synthetase (284 aa).

ATP is bound at residue 30–37 (MGNLHDGH). H37 acts as the Proton donor in catalysis. (R)-pantoate is bound at residue Q61. A beta-alanine-binding site is contributed by Q61. Position 149–152 (149–152 (GEKD)) interacts with ATP. Q155 contacts (R)-pantoate. ATP contacts are provided by residues V178 and 186–189 (LSSR).

This sequence belongs to the pantothenate synthetase family. As to quaternary structure, homodimer.

The protein resides in the cytoplasm. It catalyses the reaction (R)-pantoate + beta-alanine + ATP = (R)-pantothenate + AMP + diphosphate + H(+). It functions in the pathway cofactor biosynthesis; (R)-pantothenate biosynthesis; (R)-pantothenate from (R)-pantoate and beta-alanine: step 1/1. Its function is as follows. Catalyzes the condensation of pantoate with beta-alanine in an ATP-dependent reaction via a pantoyl-adenylate intermediate. This Cronobacter sakazakii (strain ATCC BAA-894) (Enterobacter sakazakii) protein is Pantothenate synthetase.